Consider the following 273-residue polypeptide: Ethanolamine ammonia-lyase small subunit (273 aa).

3 residues coordinate adenosylcob(III)alamin: valine 164, glutamate 185, and cysteine 214.

This sequence belongs to the EutC family. The basic unit is a heterodimer which dimerizes to form tetramers. The heterotetramers trimerize; 6 large subunits form a core ring with 6 small subunits projecting outwards. It depends on adenosylcob(III)alamin as a cofactor.

The protein resides in the bacterial microcompartment. It catalyses the reaction ethanolamine = acetaldehyde + NH4(+). The protein operates within amine and polyamine degradation; ethanolamine degradation. Functionally, catalyzes the deamination of various vicinal amino-alcohols to oxo compounds. Allows this organism to utilize ethanolamine as the sole source of nitrogen and carbon in the presence of external vitamin B12. This is Ethanolamine ammonia-lyase small subunit from Pseudomonas paraeruginosa (strain DSM 24068 / PA7) (Pseudomonas aeruginosa (strain PA7)).